The chain runs to 687 residues: CWF19-like protein 2 homolog (687 aa).

The stretch at 6-51 (FESGREKDKARQELREAREAMLQQAKERAELRGQRERQKELRGEAD) forms a coiled coil. Residues 24–50 (EAMLQQAKERAELRGQRERQKELRGEA) show a composition bias toward basic and acidic residues. Residues 24–281 (EAMLQQAKER…PKSRPSCLTD (258 aa)) are disordered. Basic residues predominate over residues 66-92 (KKSKKNVSKHKSRSKSKSSKKSRKHRN). A compositionally biased stretch (low complexity) spans 93-107 (SSSSSESSTSSSSSF). Residues 108 to 131 (SEDEKERKRRKKKSKRSRKESASE) are a coiled coil. The span at 114–125 (RKRRKKKSKRSR) shows a compositional bias: basic residues. Residues serine 128 and serine 130 each carry the phosphoserine modification. Basic and acidic residues-rich tracts occupy residues 146 to 157 (VTKKEPPQRDDW) and 168 to 180 (FSRE…KPNE). A coiled-coil region spans residues 290 to 325 (KAIKAELKGKKELAAELNQQLEAARKERAEFIASGE). Residues 355–383 (VRPLVQSGDPNESYGGRMGPKRGSKKVDT) are disordered. The stretch at 444–475 (KQISASDAEKREMQSAIREHEKLVATLDNCER) forms a coiled coil.

Belongs to the CWF19 family.

This is CWF19-like protein 2 homolog from Drosophila melanogaster (Fruit fly).